Consider the following 644-residue polypeptide: Prolyl 3,4-dihydroxylase TPA1 (644 aa).

Positions 141–247 (SKTDMSINTY…RLSIQGWYHI (107 aa)) constitute a Fe2OG dioxygenase domain. Residues histidine 159 and aspartate 161 each contribute to the Fe cation site. Tyrosine 173 contributes to the 2-oxoglutarate binding site. A Fe cation-binding site is contributed by histidine 227. Arginine 238 provides a ligand contact to 2-oxoglutarate. The residue at position 607 (serine 607) is a Phosphoserine.

Belongs to the TPA1 family. In terms of assembly, monomer and homodimer. Interacts with FRK1, eRF1 (SUP1), eRF3 (SUP35) and polyadenylate-binding protein PAB1. Interacts with ETT1. It depends on Fe(2+) as a cofactor. L-ascorbate is required as a cofactor.

It localises to the nucleus. The enzyme catalyses [ribosomal protein uS12]-L-proline + 2-oxoglutarate + O2 = [ribosomal protein uS12]-(3S)-3-hydroxy-L-proline + succinate + CO2. It catalyses the reaction [ribosomal protein uS12]-(3S)-3-hydroxy-L-proline + 2-oxoglutarate + O2 = [ribosomal protein uS12]-(3S)-3,4-dihydroxy-L-proline + succinate + CO2. Its function is as follows. Prolyl 3,4-dihydroxylase that catalyzes 3,4-dihydroxylation of 'Pro-64' of small ribosomal subunit uS12 (RPS23A and RPS23B), thereby regulating protein translation termination efficiency. Part of a messenger ribonucleoprotein (mRNP) complex at the 3'-UTR of mRNAs. It associates specifically with components of the translation termination complex and is involved in both translation termination and in regulation of normal mRNA decay through translation termination-coupled poly(A) shortening. The sequence is that of Prolyl 3,4-dihydroxylase TPA1 from Saccharomyces cerevisiae (strain ATCC 204508 / S288c) (Baker's yeast).